We begin with the raw amino-acid sequence, 353 residues long: Photosystem II D2 protein (353 aa).

Residue threonine 2 is modified to N-acetylthreonine. Threonine 2 carries the phosphothreonine modification. Residues 41-61 (CAYFALGGWFTGTTFVTSWYT) traverse the membrane as a helical segment. Residue histidine 118 participates in chlorophyll a binding. A helical transmembrane segment spans residues 125 to 141 (GFMLRQFELARSVQLRP). Residues glutamine 130 and asparagine 143 each contribute to the pheophytin a site. The chain crosses the membrane as a helical span at residues 153 to 166 (VFVSVFLIYPLGQS). Histidine 198 serves as a coordination point for chlorophyll a. The helical transmembrane segment at 208-228 (AALLCAIHGATVENTLFEDGD) threads the bilayer. Residues histidine 215 and phenylalanine 262 each contribute to the a plastoquinone site. Residue histidine 215 participates in Fe cation binding. Fe cation is bound at residue histidine 269. A helical transmembrane segment spans residues 279–295 (GLWMSALGVVGLALNLR).

This sequence belongs to the reaction center PufL/M/PsbA/D family. As to quaternary structure, PSII is composed of 1 copy each of membrane proteins PsbA, PsbB, PsbC, PsbD, PsbE, PsbF, PsbH, PsbI, PsbJ, PsbK, PsbL, PsbM, PsbT, PsbX, PsbY, PsbZ, Psb30/Ycf12, at least 3 peripheral proteins of the oxygen-evolving complex and a large number of cofactors. It forms dimeric complexes. The cofactor is The D1/D2 heterodimer binds P680, chlorophylls that are the primary electron donor of PSII, and subsequent electron acceptors. It shares a non-heme iron and each subunit binds pheophytin, quinone, additional chlorophylls, carotenoids and lipids. There is also a Cl(-1) ion associated with D1 and D2, which is required for oxygen evolution. The PSII complex binds additional chlorophylls, carotenoids and specific lipids..

It localises to the plastid. Its subcellular location is the chloroplast thylakoid membrane. It carries out the reaction 2 a plastoquinone + 4 hnu + 2 H2O = 2 a plastoquinol + O2. Its function is as follows. Photosystem II (PSII) is a light-driven water:plastoquinone oxidoreductase that uses light energy to abstract electrons from H(2)O, generating O(2) and a proton gradient subsequently used for ATP formation. It consists of a core antenna complex that captures photons, and an electron transfer chain that converts photonic excitation into a charge separation. The D1/D2 (PsbA/PsbD) reaction center heterodimer binds P680, the primary electron donor of PSII as well as several subsequent electron acceptors. D2 is needed for assembly of a stable PSII complex. The polypeptide is Photosystem II D2 protein (Ranunculus macranthus (Large buttercup)).